A 248-amino-acid chain; its full sequence is Triosephosphate isomerase (248 aa).

Position 9-11 (9-11) interacts with substrate; that stretch reads NWK. His94 serves as the catalytic Electrophile. Glu166 (proton acceptor) is an active-site residue. Substrate is bound by residues Gly172, Ser212, and 233–234; that span reads GG.

This sequence belongs to the triosephosphate isomerase family. Homodimer.

It localises to the cytoplasm. The catalysed reaction is D-glyceraldehyde 3-phosphate = dihydroxyacetone phosphate. It participates in carbohydrate biosynthesis; gluconeogenesis. Its pathway is carbohydrate degradation; glycolysis; D-glyceraldehyde 3-phosphate from glycerone phosphate: step 1/1. Functionally, involved in the gluconeogenesis. Catalyzes stereospecifically the conversion of dihydroxyacetone phosphate (DHAP) to D-glyceraldehyde-3-phosphate (G3P). This is Triosephosphate isomerase from Alkaliphilus metalliredigens (strain QYMF).